Here is a 430-residue protein sequence, read N- to C-terminus: Type II methyltransferase M.Sau96I (430 aa).

The 55-residue stretch at 9-63 (IEKMKNQNIKTQTELAEKIDISKSQLSFMFSDEYEPLKKNVIKLADVLKVSPNDI) folds into the HTH cro/C1-type domain. One can recognise an SAM-dependent MTase C5-type domain in the interval 99–429 (YNVFETFAGA…KSLVHYLNQF (331 aa)). C174 is an active-site residue.

The protein belongs to the class I-like SAM-binding methyltransferase superfamily. C5-methyltransferase family.

It carries out the reaction a 2'-deoxycytidine in DNA + S-adenosyl-L-methionine = a 5-methyl-2'-deoxycytidine in DNA + S-adenosyl-L-homocysteine + H(+). Functionally, a methylase that recognizes the double-stranded sequence 5'-GGNCC-3', methylates C-4 on both strands, and protects the DNA from cleavage by the Sau96I endonuclease. This is Type II methyltransferase M.Sau96I from Staphylococcus aureus.